The chain runs to 255 residues: Taurine import ATP-binding protein TauB (255 aa).

The region spanning 2-229 (LQISHLYADY…RFVAGESSRS (228 aa)) is the ABC transporter domain. Residue 34-41 (GPSGCGKT) participates in ATP binding.

Belongs to the ABC transporter superfamily. Taurine importer (TC 3.A.1.17.1) family. As to quaternary structure, the complex is composed of two ATP-binding proteins (TauB), two transmembrane proteins (TauC) and a solute-binding protein (TauA).

The protein resides in the cell inner membrane. The catalysed reaction is taurine(out) + ATP + H2O = taurine(in) + ADP + phosphate + H(+). Part of the ABC transporter complex TauABC involved in taurine import. Responsible for energy coupling to the transport system. This chain is Taurine import ATP-binding protein TauB, found in Shigella flexneri serotype 5b (strain 8401).